The sequence spans 219 residues: Uracil-DNA glycosylase (219 aa).

Residue Asp61 is the Proton acceptor of the active site.

This sequence belongs to the uracil-DNA glycosylase (UDG) superfamily. UNG family.

It is found in the cytoplasm. It carries out the reaction Hydrolyzes single-stranded DNA or mismatched double-stranded DNA and polynucleotides, releasing free uracil.. Its function is as follows. Excises uracil residues from the DNA which can arise as a result of misincorporation of dUMP residues by DNA polymerase or due to deamination of cytosine. In Neisseria gonorrhoeae (strain ATCC 700825 / FA 1090), this protein is Uracil-DNA glycosylase.